The chain runs to 305 residues: MTATIDVDNLMSRLLNVGMSGGRLTTSVNEQELQTCCAVAKSVFASQASLLEVEPPIIVCGDIHGQYSDLLRIFDKNGFPPDINFLFLGDYVDRGRQNIETICLMFCFKIKYPENFFMLRGNHECPAINRVYGFYEECNRRYKSTRLWSIFQDTFNWMPLCGLIGSRILCMHGGLSPHLQTLDQLRQLPRPQDPPNPSIGIDLLWADPDQWVKGWQANTRGVSYVFGQDVVADVCSRLDIDLVARAHQVVQDGYEFFASKKMVTIFSAPHYCGQFDNSAATMKVDENMVCTFVMYKPTPKSLRKG.

Mn(2+) is bound by residues D62, H64, D90, and N122. Residue H123 is the Proton donor of the active site. Mn(2+) is bound by residues H172 and H247.

This sequence belongs to the PPP phosphatase family. In terms of tissue distribution, expressed in male germline including spermatocytes, spermatids and spermatozoa.

The protein localises to the chromosome. Its subcellular location is the cell projection. It is found in the pseudopodium. It localises to the cytoplasm. It carries out the reaction O-phospho-L-seryl-[protein] + H2O = L-seryl-[protein] + phosphate. It catalyses the reaction O-phospho-L-threonyl-[protein] + H2O = L-threonyl-[protein] + phosphate. Functionally, probable phosphatase which plays a redundant role with gsp-4 in spermatogenesis by regulating sister chromatid segregation during meiosis. In addition, involved in sperm motility by controlling the dynamic disassembly of major sperm proteins (MSP) in the spermatozoan pseudopodium. In Caenorhabditis elegans, this protein is Serine/threonine-protein phosphatase PP1-delta.